We begin with the raw amino-acid sequence, 159 residues long: NADH-quinone oxidoreductase subunit I (159 aa).

4Fe-4S ferredoxin-type domains lie at 51–80 (RRYE…IEAD) and 90–119 (TRYD…EGPN). 8 residues coordinate [4Fe-4S] cluster: C60, C63, C66, C70, C99, C102, C105, and C109.

The protein belongs to the complex I 23 kDa subunit family. As to quaternary structure, NDH-1 is composed of 14 different subunits. Subunits NuoA, H, J, K, L, M, N constitute the membrane sector of the complex. [4Fe-4S] cluster serves as cofactor.

It localises to the cell inner membrane. The catalysed reaction is a quinone + NADH + 5 H(+)(in) = a quinol + NAD(+) + 4 H(+)(out). In terms of biological role, NDH-1 shuttles electrons from NADH, via FMN and iron-sulfur (Fe-S) centers, to quinones in the respiratory chain. The immediate electron acceptor for the enzyme in this species is believed to be ubiquinone. Couples the redox reaction to proton translocation (for every two electrons transferred, four hydrogen ions are translocated across the cytoplasmic membrane), and thus conserves the redox energy in a proton gradient. This is NADH-quinone oxidoreductase subunit I from Rickettsia massiliae (strain Mtu5).